The chain runs to 448 residues: Vimentin (448 aa).

The head stretch occupies residues 1–77 (PRHLEPAGSN…FSLADAINTE (77 aa)). Phosphoserine is present on serine 9. A glycan (O-linked (GlcNAc) threonine) is linked at threonine 16. Serine 17 is subject to Phosphoserine; by PKC; alternate. Serine 17 is a glycosylation site (O-linked (GlcNAc) serine; alternate). Serine 22 carries the phosphoserine; by CaMK2, PKA, PKC and ROCK2 modification. 3 positions are modified to phosphoserine: serine 29, serine 31, and serine 33. Tyrosine 35 is modified (phosphotyrosine). Residue serine 37 is modified to Phosphoserine. Serine 38 is modified (phosphoserine; by CDK5 and CDK1). Tyrosine 43 is modified (phosphotyrosine). Phosphoserine; by PKA and PKC is present on serine 48. Serine 54 carries the post-translational modification Phosphoserine; by AURKB and ROCK2. Serine 55 carries the phosphoserine modification. Position 65 is a phosphoserine; by CaMK2 (serine 65). Serine 69 is subject to Phosphoserine. A coil 1A region spans residues 78–113 (FKNTRTNEKVELQELNDRFADYIDKVRFLEQQNKIL). Residues 78 to 113 (FKNTRTNEKVELQELNDRFADYIDKVRFLEQQNKIL) are a coiled coil. Residues 85–393 (EKVELQELND…KLLEGEESRI (309 aa)) enclose the IF rod domain. Lysine 86 participates in a covalent cross-link: Glycyl lysine isopeptide (Lys-Gly) (interchain with G-Cter in SUMO2). Tyrosine 99 carries the post-translational modification Phosphotyrosine. Lysine 102, lysine 111, and lysine 121 each carry N6-acetyllysine; alternate. N6-succinyllysine; alternate occurs at positions 102 and 111. Residues lysine 102, lysine 111, and lysine 121 each participate in a glycyl lysine isopeptide (Lys-Gly) (interchain with G-Cter in SUMO2); alternate cross-link. Positions 114–135 (LAELEQLKGQGKSRLGDLYEEE) are linker 1. At serine 126 the chain carries Phosphoserine. Residues 136–227 (MRELRRQVDQ…KLHDEEIQEL (92 aa)) adopt a coiled-coil conformation. Residues 136–227 (MRELRRQVDQ…KLHDEEIQEL (92 aa)) are coil 1B. Residue lysine 150 is modified to N6-acetyllysine. Lysine 170 is subject to N6-acetyllysine; alternate. Lysine 170 bears the N6-succinyllysine; alternate mark. A Phosphoserine modification is found at serine 196. Lysine 205 carries the N6-acetyllysine; alternate modification. Lysine 205 participates in a covalent cross-link: Glycyl lysine isopeptide (Lys-Gly) (interchain with G-Cter in SUMO2); alternate. Serine 208 is subject to Phosphoserine. At lysine 217 the chain carries N6-acetyllysine. The tract at residues 228–250 (QAQIQEQHVQIDVDVSKPDLTAA) is linker 12. A Glycyl lysine isopeptide (Lys-Gly) (interchain with G-Cter in SUMO2) cross-link involves residue lysine 244. Positions 251–389 (LRDVRQQYES…ATYRKLLEGE (139 aa)) are coil 2. Lysine 276 carries the post-translational modification N6-acetyllysine; alternate. Lysine 276 is subject to N6-succinyllysine; alternate. Lysine 276 participates in a covalent cross-link: Glycyl lysine isopeptide (Lys-Gly) (interchain with G-Cter in SUMO2); alternate. Phosphoserine is present on serine 281. Residues 285-389 (NRNNDALRQA…ATYRKLLEGE (105 aa)) adopt a coiled-coil conformation. Residue lysine 295 forms a Glycyl lysine isopeptide (Lys-Gly) (interchain with G-Cter in SUMO2) linkage. A Phosphoserine modification is found at serine 307. The [IL]-x-C-x-x-[DE] motif signature appears at 308-311 (LTCE). Position 355 is an N6-acetyllysine; alternate (lysine 355). A Glycyl lysine isopeptide (Lys-Gly) (interchain with G-Cter in SUMO2); alternate cross-link involves residue lysine 355. The tract at residues 390–448 (ESRISLPLPNFSSLNLRETNLESLPLVDTHSKRTLLIKTVETRDGQVINETSQHHDDLE) is tail. Serine 391, serine 394, serine 401, and serine 402 each carry phosphoserine. Position 408 is a phosphothreonine (threonine 408). A Phosphoserine modification is found at serine 412. A Phosphothreonine modification is found at threonine 418. Serine 420 carries the phosphoserine modification. Lysine 421 participates in a covalent cross-link: Glycyl lysine isopeptide (Lys-Gly) (interchain with G-Cter in SUMO2). At lysine 427 the chain carries N6-acetyllysine; alternate. N6-succinyllysine; alternate is present on lysine 427. Lysine 427 participates in a covalent cross-link: Glycyl lysine isopeptide (Lys-Gly) (interchain with G-Cter in SUMO2); alternate. A Glycyl lysine isopeptide (Lys-Gly) (interchain with G-Cter in SUMO1); alternate cross-link involves residue lysine 427. 2 positions are modified to phosphothreonine: threonine 428 and threonine 440. Position 441 is a phosphoserine (serine 441).

It belongs to the intermediate filament family. In terms of assembly, homomer assembled from elementary dimers. Identified in complexes that contain VIM, EZR, AHNAK, BFSP1, BFSP2, ANK2, PLEC, PRX and spectrin. Interacts with BCAS3. Interacts with LGSN. Interacts with SYNM. Interacts (via rod region) with PLEC (via CH 1 domain). Interacts with STK33. Interacts with LARP6. Interacts with RAB8B. Interacts with TOR1A; the interaction associates TOR1A with the cytoskeleton. Interacts with TOR1AIP1. Interacts with TOR1AIP1. Interacts with DIAPH1. Interacts with EPPK1; interaction is dependent of higher-order structure of intermediate filament. Interacts with the non-receptor tyrosine kinase SRMS; the interaction leads to phosphorylation of VIM. Interacts with NOD2. Interacts (via head region) with CORO1C. Interacts with HDGF. Interacts with PRKCE (via phorbol-ester/DAG-type 2 domain). Interacts with BFSP2. Interacts with PPL. Interacts with PKP1 and PKP2. Interacts with SCRIB (via PDZ domains); the interaction protects SCRIB from proteasomal degradation and facilitates SCRIB localization to intermediate filaments, the interaction is reduced by cell contact inhibition. Post-translationally, one of the most prominent phosphoproteins in various cells of mesenchymal origin. Phosphorylation is enhanced during cell division, at which time vimentin filaments are significantly reorganized. Phosphorylation by PKN1 inhibits the formation of filaments. Filament disassembly during mitosis is promoted by phosphorylation at Ser-37 as well as by nestin. Phosphorylated at Ser-38 by CDK5 during neutrophil secretion in the cytoplasm. Phosphorylated by STK33. Phosphorylated on tyrosine residues by SRMS. S-nitrosylation is induced by interferon-gamma and oxidatively-modified low-densitity lipoprotein (LDL(ox)) possibly implicating the iNOS-S100A8/9 transnitrosylase complex.

The protein resides in the cytoplasm. It localises to the cytoskeleton. It is found in the nucleus matrix. Its subcellular location is the cell membrane. Functionally, vimentins are class-III intermediate filaments found in various non-epithelial cells, especially mesenchymal cells. Vimentin is attached to the nucleus, endoplasmic reticulum, and mitochondria, either laterally or terminally. Plays a role in cell directional movement, orientation, cell sheet organization and Golgi complex polarization at the cell migration front. Protects SCRIB from proteasomal degradation and facilitates its localization to intermediate filaments in a cell contact-mediated manner. In terms of biological role, involved with LARP6 in the stabilization of type I collagen mRNAs for CO1A1 and CO1A2. The chain is Vimentin (VIM) from Cricetulus griseus (Chinese hamster).